The chain runs to 27 residues: Phospholipase A2 1 (27 aa).

It belongs to the phospholipase A2 family. Group I subfamily. The cofactor is Ca(2+). In terms of tissue distribution, expressed by the venom gland.

It is found in the secreted. It catalyses the reaction a 1,2-diacyl-sn-glycero-3-phosphocholine + H2O = a 1-acyl-sn-glycero-3-phosphocholine + a fatty acid + H(+). In terms of biological role, snake venom phospholipase A2 (PLA2) that inhibits neuromuscular transmission by blocking acetylcholine release from the nerve termini. PLA2 catalyzes the calcium-dependent hydrolysis of the 2-acyl groups in 3-sn-phosphoglycerides. The protein is Phospholipase A2 1 of Micrurus nigrocinctus (Central American coral snake).